Consider the following 150-residue polypeptide: D-aminoacyl-tRNA deacylase (150 aa).

A Gly-cisPro motif, important for rejection of L-amino acids motif is present at residues 138–139 (GP).

This sequence belongs to the DTD family. Homodimer.

It is found in the cytoplasm. It catalyses the reaction glycyl-tRNA(Ala) + H2O = tRNA(Ala) + glycine + H(+). The enzyme catalyses a D-aminoacyl-tRNA + H2O = a tRNA + a D-alpha-amino acid + H(+). An aminoacyl-tRNA editing enzyme that deacylates mischarged D-aminoacyl-tRNAs. Also deacylates mischarged glycyl-tRNA(Ala), protecting cells against glycine mischarging by AlaRS. Acts via tRNA-based rather than protein-based catalysis; rejects L-amino acids rather than detecting D-amino acids in the active site. By recycling D-aminoacyl-tRNA to D-amino acids and free tRNA molecules, this enzyme counteracts the toxicity associated with the formation of D-aminoacyl-tRNA entities in vivo and helps enforce protein L-homochirality. This Christiangramia forsetii (strain DSM 17595 / CGMCC 1.15422 / KT0803) (Gramella forsetii) protein is D-aminoacyl-tRNA deacylase.